The sequence spans 441 residues: MSKVTPQPKIGFVSLGCPKNLVDSERILTELRTEGYDVVPSYDDADMVIVNTCGFIDSAVQESLEAIGEALNENGKVIVTGCLGAKEDQIREVHPKVLEITGPHSYEQVLEHVHHYVPKPKHNPFLSLVPEQGVKLTPRHYAYLKISEGCNHRCTFCIIPSMRGDLVSRPIGEVLSEAKRLVDAGVKEILVISQDTSAYGVDVKHRTGFHNGKPVKTSMVSLCEQLSKLGIWTRLHYVYPYPHVDDVIPLMAEGKILPYLDIPLQHASPRILKLMKRPGSVDRQLARIKQWREICPELTLRSTFIVGFPGETEEDFQMLLDFLKEARLDRVGCFKYSPVEGADANALPDQVPEEVKEERWNRFMQLQQQISAERLQEKVGREILVIIDEVDEEGAIGRSMADAPEIDGAVYLNGETNVKPGDILRVKVEHADEYDLWGSRV.

The MTTase N-terminal domain occupies 8 to 118 (PKIGFVSLGC…VLEHVHHYVP (111 aa)). 6 residues coordinate [4Fe-4S] cluster: Cys-17, Cys-53, Cys-82, Cys-150, Cys-154, and Cys-157. The 238-residue stretch at 136–373 (LTPRHYAYLK…MQLQQQISAE (238 aa)) folds into the Radical SAM core domain. The TRAM domain maps to 376 to 441 (QEKVGREILV…DEYDLWGSRV (66 aa)).

It belongs to the methylthiotransferase family. RimO subfamily. Requires [4Fe-4S] cluster as cofactor.

It is found in the cytoplasm. The catalysed reaction is L-aspartate(89)-[ribosomal protein uS12]-hydrogen + (sulfur carrier)-SH + AH2 + 2 S-adenosyl-L-methionine = 3-methylsulfanyl-L-aspartate(89)-[ribosomal protein uS12]-hydrogen + (sulfur carrier)-H + 5'-deoxyadenosine + L-methionine + A + S-adenosyl-L-homocysteine + 2 H(+). Its function is as follows. Catalyzes the methylthiolation of an aspartic acid residue of ribosomal protein uS12. The protein is Ribosomal protein uS12 methylthiotransferase RimO of Shigella boydii serotype 18 (strain CDC 3083-94 / BS512).